We begin with the raw amino-acid sequence, 395 residues long: MEEAVESPEVKEFEYFSDAVFIPKDGNTLSVGVIKRIETAVKEGEVVKVVSIVKEIIQNVSRNKIKIAVTGDSGNGMSSFINALRLIGHEEKDSAPTGVVRTTQKPTCYFSSHFPYVELWDLPGLGATAQSVESYLEEMQISIYDLIIIVASEQFSLNHVKLAITMQRMRKRFYVVWTKLDRDLSTSTFPEPQLLQSIQRNIRDSLQKEKVKEHPMFLVSVFKPESHDFPKLRETLQKDLPVIKYHGLVETLYQVCEKTVNERVESIKKSIDEDNLHTEFGISDPGNAIEIRKAFQKTFGLDDISLHLVALEMKNKHFNTSMESQETQRYQQDDWVLARLYRTGTRVGSIGFDYMKCCFTSHHSRCKQQKDILDETAAKAKEVLLKILRLSIPHP.

The 177-residue stretch at 63–239 (NKIKIAVTGD…PKLRETLQKD (177 aa)) folds into the IRG-type G domain. GTP contacts are provided by residues 72 to 79 (DSGNGMSS), 97 to 101 (TGVVR), and 179 to 181 (KLD).

This sequence belongs to the TRAFAC class dynamin-like GTPase superfamily. IRG family. In terms of processing, ubiquitinated; polyubiquitinated in the cytosol, promoting Gbp1 recruitment to the T.gondii parasitophorous vacuole membranes.

Its subcellular location is the cytoplasmic vesicle membrane. It is found in the golgi apparatus membrane. The protein localises to the cytoplasm. It localises to the cytosol. It carries out the reaction GTP + H2O = GDP + phosphate + H(+). Immunity-related GTPase that plays important roles in innate immunity and inflammatory response. Acts as a dynamin-like protein that binds to intracellular membranes and promotes remodeling and trafficking of those membranes. Required for clearance of acute protozoan and bacterial infections. Acts by participating to Tgtp1/Irgb6 and Gbp1-mediated parasite killing by promoting their accumulation on the T.gondii parasitophorous vacuole membranes. Also required for prolonged loading of ubiquitin and p62/Sqstm1 to parasitophorous vacuole membranes. Also acts as a key negative regulator of the inflammatory response by inhibiting the non-canonical inflammasome, thereby protecting against Casp11-driven septic shock during endotoxemia. This chain is Immunity-related GTPase family M protein 2, found in Mus musculus (Mouse).